The following is a 550-amino-acid chain: MASVFHYFLLVLVFLDTHAAQPFCLPGCTCSEESFGRTLQCTSVSLGKIPGNLSEEFKQVRIENSPLFEMPQGSFINMSTLEYLWLNFNNISVIHLGALEHLPELRELRLEGNKLCSVPWTAFRATPLLRVLDLKRNKIDALPELALQFLVSLTYLDLSSNRLTVVSKSVFLNWPAYQKCRQPDCGAEILSSLVVALHDNPWVCDCRLRGLVQFVKSITLPVILVNSYLICQGPLSKAGQLFHETELSACMKPQISTPSANITIRAGQNVTLRCLAQASPSPSIAWTYPLSMWREFDVLTSSTGEDTALSELAIPAAHLVDSGNYTCMASNSIGKSNLVISLHVQPAQALHAPDSLSIPSEGNAYIDLRVVKQTVHGILLEWLAVADTSKEEWFTLYIASDEAFRKEVVHIGPGINTYAVDDLLPGTKYEACLSLEGQPPHQGQCVAFVTGRDAGGLEAREHLLHVTVVLCVVLLAVPVGAYAWAAQGPCSCSKWVLRGCLHRRKAPSCTPAAPQSKDGSFREHPAVCDDGEGHIDTEGDKEKGGTEDNS.

The first 19 residues, 1 to 19 (MASVFHYFLLVLVFLDTHA), serve as a signal peptide directing secretion. An LRRNT domain is found at 23 to 54 (FCLPGCTCSEESFGRTLQCTSVSLGKIPGNLS). Residue N52 is glycosylated (N-linked (GlcNAc...) asparagine). LRR repeat units lie at residues 80-103 (TLEY…EHLP), 104-125 (ELRE…AFRA), 128-149 (LLRV…ALQF), and 152-173 (SLTY…VFLN). An LRRCT domain is found at 200-252 (NPWVCDCRLRGLVQFVKSITLPVILVNSYLICQGPLSKAGQLFHETELSACMK). An Ig-like domain is found at 253–341 (PQISTPSANI…SIGKSNLVIS (89 aa)). Cysteines 274 and 327 form a disulfide. Residues 361–451 (EGNAYIDLRV…QGQCVAFVTG (91 aa)) form the Fibronectin type-III domain. The helical transmembrane segment at 466 to 486 (VTVVLCVVLLAVPVGAYAWAA) threads the bilayer. A disordered region spans residues 508–550 (SCTPAAPQSKDGSFREHPAVCDDGEGHIDTEGDKEKGGTEDNS). Basic and acidic residues predominate over residues 519 to 550 (GSFREHPAVCDDGEGHIDTEGDKEKGGTEDNS).

In terms of assembly, interacts with LRIT1; may form a heterodimer with LRIT1.

It is found in the membrane. The protein is Leucine-rich repeat, immunoglobulin-like domain and transmembrane domain-containing protein 2 (LRIT2) of Homo sapiens (Human).